The chain runs to 225 residues: MKSIQIAIDGPASSGKSTVAKIIAKNLGYTYLDTGAMYRSATYLALTNGIEVTDQNRIVDLLAQYPIRFGRDENGQQLVFVGDEDVTLPIRDNQVTNNVSAVAALPLVREELVRLQQDIAQAGGIVMDGRDIGTVVLPQAELKIFLVASVEERALRRFKENTERGIETDLESLKEEIAARDYKDSNREVSPLKAADDAITFDTTGVSIEGVVKFISEKAKEILDR.

10 to 18 is an ATP binding site; the sequence is GPASSGKST.

This sequence belongs to the cytidylate kinase family. Type 1 subfamily.

Its subcellular location is the cytoplasm. The enzyme catalyses CMP + ATP = CDP + ADP. It catalyses the reaction dCMP + ATP = dCDP + ADP. This Streptococcus suis (strain 98HAH33) protein is Cytidylate kinase.